The primary structure comprises 177 residues: Coatomer subunit zeta-1 (177 aa).

M1 bears the N-acetylmethionine mark.

Belongs to the adaptor complexes small subunit family. Oligomeric complex that consists of at least the alpha, beta, beta', gamma, delta, epsilon and zeta subunits.

Its subcellular location is the cytoplasm. It localises to the golgi apparatus membrane. It is found in the cytoplasmic vesicle. The protein resides in the COPI-coated vesicle membrane. The coatomer is a cytosolic protein complex that binds to dilysine motifs and reversibly associates with Golgi non-clathrin-coated vesicles, which further mediate biosynthetic protein transport from the ER, via the Golgi up to the trans Golgi network. Coatomer complex is required for budding from Golgi membranes, and is essential for the retrograde Golgi-to-ER transport of dilysine-tagged proteins. The zeta subunit may be involved in regulating the coat assembly and, hence, the rate of biosynthetic protein transport due to its association-dissociation properties with the coatomer complex. In Bos taurus (Bovine), this protein is Coatomer subunit zeta-1 (COPZ1).